The primary structure comprises 337 residues: Pyruvate dehydrogenase E1 component subunit beta (337 aa).

Position 73 (glutamate 73) interacts with thiamine diphosphate.

In terms of assembly, heterodimer of an alpha and a beta chain. The cofactor is thiamine diphosphate.

It carries out the reaction N(6)-[(R)-lipoyl]-L-lysyl-[protein] + pyruvate + H(+) = N(6)-[(R)-S(8)-acetyldihydrolipoyl]-L-lysyl-[protein] + CO2. Functionally, the pyruvate dehydrogenase complex catalyzes the overall conversion of pyruvate to acetyl-CoA and CO(2). It contains multiple copies of three enzymatic components: pyruvate dehydrogenase (E1), dihydrolipoamide acetyltransferase (E2) and lipoamide dehydrogenase (E3). The sequence is that of Pyruvate dehydrogenase E1 component subunit beta (pdhB) from Leifsonia xyli subsp. xyli (strain CTCB07).